A 2169-amino-acid chain; its full sequence is Vitellogenin-A1 (2169 aa).

The N-terminal stretch at 1–46 (MATDGITSRFGFNERRRTHNRNSCRILEDKMLAKLLLLALAGLTAA) is a signal peptide. Residues asparagine 107 and asparagine 125 are each glycosylated (N-linked (GlcNAc...) asparagine). The 893-residue stretch at 116 to 1008 (WMPNYEYVYN…SNDHRYPSGL (893 aa)) folds into the Vitellogenin domain. A sulfotyrosine mark is found at tyrosine 159 and tyrosine 163. N-linked (GlcNAc...) asparagine glycosylation is found at asparagine 360, asparagine 391, and asparagine 435. 2 disordered regions span residues 426 to 481 (DKKN…DKVE) and 514 to 570 (NDTS…SSSE). Over residues 438-461 (SSSSSSSSSSSSSSSESSSSSSES) the composition is skewed to low complexity. Asparagine 514 carries an N-linked (GlcNAc...) asparagine glycan. The segment covering 517 to 531 (SSDSSSSDSSSSSSS) has biased composition (low complexity). An N-linked (GlcNAc...) asparagine glycan is attached at asparagine 538. The span at 541-570 (SSYSSSSSSSSSSSSSESSSYSSSSSSSSE) shows a compositional bias: low complexity. N-linked (GlcNAc...) asparagine glycosylation is found at asparagine 587, asparagine 763, and asparagine 781. 3 positions are modified to sulfotyrosine: tyrosine 1067, tyrosine 1070, and tyrosine 1074. Asparagine 1140, asparagine 1233, and asparagine 1336 each carry an N-linked (GlcNAc...) asparagine glycan. 3 positions are modified to sulfotyrosine: tyrosine 1563, tyrosine 1564, and tyrosine 1570. N-linked (GlcNAc...) asparagine glycans are attached at residues asparagine 1652 and asparagine 1696. Tyrosine 1737, tyrosine 1806, tyrosine 1809, tyrosine 1822, tyrosine 1824, and tyrosine 1888 each carry sulfotyrosine. The 210-residue stretch at 1770-1979 (PSCSFSNDYF…SYAITGQNCT (210 aa)) folds into the VWFD domain. Disulfide bonds link cysteine 1772-cysteine 1942 and cysteine 1794-cysteine 1978. N-linked (GlcNAc...) asparagine glycosylation is present at asparagine 1977. Over residues 2026–2063 (EESSSSSSSSSSDSSSSSSSSESSSRSRSGSSSSSSSS) the composition is skewed to low complexity. A disordered region spans residues 2026–2081 (EESSSSSSSSSSDSSSSSSSSESSSRSRSGSSSSSSSSEEQKEFHPHKQEHSMKEC). Residues 2064 to 2079 (EEQKEFHPHKQEHSMK) are compositionally biased toward basic and acidic residues.

Post-translationally, glycosylated, phosphorylated and sulfated. The large subunit is sulfated more extensively than the small one. As to expression, produced by the fat body, where it is cleaved in the rough endoplasmic reticulum or cis-Golgi before being secreted into hemolymph. It is then sequestered by a single class of receptor mediated endocytosis in the ovary.

Its function is as follows. Precursor of the egg-yolk proteins that are sources of nutrients during embryonic development. May supply aromatic amino acids to the cuticle of rapidly developing embryos. This chain is Vitellogenin-A1 (VGA1), found in Aedes aegypti (Yellowfever mosquito).